The following is a 468-amino-acid chain: Protein wingless (468 aa).

The signal sequence occupies residues 1 to 17; it reads MDISYIFVICLMALCSG. The tract at residues 83–106 is binds porcupine; it reads VKGANLAISECQHQFRNRRWNCST. A disulfide bridge links Cys-93 with Cys-104. N-linked (GlcNAc...) asparagine glycans are attached at residues Asn-103 and Asn-108. 4 cysteine pairs are disulfide-bonded: Cys-146–Cys-154, Cys-156–Cys-185, Cys-233–Cys-247, and Cys-235–Cys-242. A lipid anchor (O-palmitoleoyl serine; by PORCN) is attached at Ser-239. The segment at 333 to 362 is disordered; that stretch reads ISKIHHPNMPSPNSLPQAGQRGGRNGRRQG. Cystine bridges form between Cys-397–Cys-428, Cys-413–Cys-423, Cys-427–Cys-467, Cys-443–Cys-458, Cys-445–Cys-455, and Cys-450–Cys-451. N-linked (GlcNAc...) asparagine glycosylation is present at Asn-414.

It belongs to the Wnt family. Monomer; folds by intramolecular disulfide bonds. Interacts with porcupine (por). Interacts with wls; in the Golgi. Interacts with en. Interacts with the proteoglycan Cow (heparan sulfate-bound form); this stabilizes wg and promotes its extracellular distribution. Interacts with peg; the interaction facilitates short-range diffusion of wg. Palmitoleoylated by porcupine. The lipid group functions as a sorting signal, targeting the ligand to polarized vesicles that transport wg to unique sites at the cell surface. Depalmitoleoylated by notum, leading to inhibit Wnt signaling pathway. In terms of processing, major form is glycosylated at 2 sites, glycosylation is stimulated by porcupine at the ER. As to expression, segmented expression in embryos. In embryonic tracheal cells, expression is in stripes flanking the tracheal placode.

It is found in the secreted. Its subcellular location is the synapse. The protein localises to the membrane. It localises to the extracellular space. The protein resides in the extracellular matrix. In terms of biological role, binds as a ligand to a family of frizzled seven-transmembrane receptors and acts through a cascade of genes on the nucleus. Segment polarity protein. May be a growth factor. Acts on neighboring cells to regulate at least one gene, the homeobox segmentation gene engrailed. Wg signal represses arm phosphorylation. Wg signaling operates by inactivating the sgg repression of engrailed autoactivation. Wg and Wnt2 have a role in the developing trachea and together are responsible for all dorsal trunk formation. Wg also acts in the developing epidermis. Acts as a morphogen, and diffuses long distances despite its lipidation. Lipophorin is required for diffusion, probably by acting as vehicle for its movement, explaining how it can spread over long distances despite its lipidation. In non-neuronal cells, wls directs wg secretion via clathrin-mediated endocytosis and the retromer complex (a conserved protein complex consisting of Vps26 and Vps35) to sustain a wls traffic loop encompassing the Golgi, the cell surface, an endocytic compartment and a retrograde route leading back to the Golgi. In neuronal cells (the larval motorneuron NMJ), wg signal moves across the synapse through the release of wls-containing exosome-like vesicles. This chain is Protein wingless (wg), found in Drosophila melanogaster (Fruit fly).